The following is a 741-amino-acid chain: Catalase-peroxidase 2 (741 aa).

A signal peptide spans 1-28 (MQKKRVGKSVVAALAIIAMSAGTVAAWA). Residues 107–228 (WHGAGTYRTY…LAATQMGLIY (122 aa)) constitute a cross-link (tryptophyl-tyrosyl-methioninium (Trp-Tyr) (with M-254)). Catalysis depends on His-108, which acts as the Proton acceptor. The segment at residues 228–254 (YVNPEGPNGNPDPVAAAKDIRDAFGRM) is a cross-link (tryptophyl-tyrosyl-methioninium (Tyr-Met) (with W-107)). Residue His-269 participates in heme b binding.

The protein belongs to the peroxidase family. Peroxidase/catalase subfamily. In terms of assembly, homodimer or homotetramer. It depends on heme b as a cofactor. In terms of processing, formation of the three residue Trp-Tyr-Met cross-link is important for the catalase, but not the peroxidase activity of the enzyme.

The enzyme catalyses H2O2 + AH2 = A + 2 H2O. It carries out the reaction 2 H2O2 = O2 + 2 H2O. Bifunctional enzyme with both catalase and broad-spectrum peroxidase activity. This chain is Catalase-peroxidase 2, found in Burkholderia ambifaria (strain ATCC BAA-244 / DSM 16087 / CCUG 44356 / LMG 19182 / AMMD) (Burkholderia cepacia (strain AMMD)).